The sequence spans 142 residues: MAAAAEGVLATRRDESARDDAAVETAEEAKEPAEADITELCRDMFSKMATYLTGELTATSEDYKLLENMNKLTSLKYLEMKDIAINISRNLKDLNQKYAGLQPYLDQINVIEEQVAALEQAAYKLDAYSKKLEAKYKKLEKR.

Residues 1-33 are disordered; sequence MAAAAEGVLATRRDESARDDAAVETAEEAKEPA. Ala2 bears the N-acetylalanine mark. Residues 11 to 33 show a composition bias toward basic and acidic residues; that stretch reads TRRDESARDDAAVETAEEAKEPA. Positions 79 to 127 form a coiled coil; that stretch reads EMKDIAINISRNLKDLNQKYAGLQPYLDQINVIEEQVAALEQAAYKLDA.

This sequence belongs to the BLOC1S2 family. As to quaternary structure, component of the biogenesis of lysosome-related organelles complex 1 (BLOC-1) composed of BLOC1S1, BLOC1S2, BLOC1S3, BLOC1S4, BLOC1S5, BLOC1S6, DTNBP1/BLOC1S7 and SNAPIN/BLOC1S8. Octamer composed of one copy each BLOC1S1, BLOC1S2, BLOC1S3, BLOC1S4, BLOC1S5, BLOC1S6, DTNBP1/BLOC1S7 and SNAPIN/BLOC1S8. Interacts directly with BLOC1S1, BLOC1S3, BLOC1S4, BLOC1S5 and SNAPIN. The BLOC-1 complex associates with the AP-3 protein complex and membrane protein cargos. Component of the BLOC-one-related complex (BORC) which is composed of BLOC1S1, BLOC1S2, BORCS5, BORCS6, BORCS7, BORCS8, KXD1 and SNAPIN. Interacts with gamma-tubulin. Interacts with IFT57.

Its subcellular location is the cytoplasm. It is found in the cytoskeleton. The protein resides in the microtubule organizing center. The protein localises to the centrosome. It localises to the lysosome membrane. Functionally, component of the BLOC-1 complex, a complex that is required for normal biogenesis of lysosome-related organelles (LRO), such as platelet dense granules and melanosomes. In concert with the AP-3 complex, the BLOC-1 complex is required to target membrane protein cargos into vesicles assembled at cell bodies for delivery into neurites and nerve terminals. The BLOC-1 complex, in association with SNARE proteins, is also proposed to be involved in neurite extension. As part of the BORC complex may play a role in lysosomes movement and localization at the cell periphery. Associated with the cytosolic face of lysosomes, the BORC complex may recruit ARL8B and couple lysosomes to microtubule plus-end-directed kinesin motor. May play a role in cell proliferation. This is Biogenesis of lysosome-related organelles complex 1 subunit 2 (BLOC1S2) from Macaca fascicularis (Crab-eating macaque).